Consider the following 194-residue polypeptide: Orotate phosphoribosyltransferase (194 aa).

Residue 117–125 (EDVVTTGLS) coordinates 5-phospho-alpha-D-ribose 1-diphosphate. Orotate contacts are provided by Thr-121 and Arg-149.

It belongs to the purine/pyrimidine phosphoribosyltransferase family. PyrE subfamily. Homodimer. Mg(2+) is required as a cofactor.

The enzyme catalyses orotidine 5'-phosphate + diphosphate = orotate + 5-phospho-alpha-D-ribose 1-diphosphate. It functions in the pathway pyrimidine metabolism; UMP biosynthesis via de novo pathway; UMP from orotate: step 1/2. Catalyzes the transfer of a ribosyl phosphate group from 5-phosphoribose 1-diphosphate to orotate, leading to the formation of orotidine monophosphate (OMP). The protein is Orotate phosphoribosyltransferase of Novosphingobium aromaticivorans (strain ATCC 700278 / DSM 12444 / CCUG 56034 / CIP 105152 / NBRC 16084 / F199).